Reading from the N-terminus, the 338-residue chain is Ketol-acid reductoisomerase (NADP(+)) (338 aa).

The KARI N-terminal Rossmann domain maps to 2–182 (TKMYYEEDTD…GGARAGVLET (181 aa)). NADP(+) contacts are provided by residues 25–28 (YGSQ), Ser51, Ser53, and 83–86 (DELQ). His108 is a catalytic residue. Gly134 serves as a coordination point for NADP(+). One can recognise a KARI C-terminal knotted domain in the interval 183–330 (TFRTETETDL…SEIRKLYCWN (148 aa)). 4 residues coordinate Mg(2+): Asp191, Glu195, Glu227, and Glu231. Ser252 provides a ligand contact to substrate.

Belongs to the ketol-acid reductoisomerase family. Mg(2+) serves as cofactor.

The catalysed reaction is (2R)-2,3-dihydroxy-3-methylbutanoate + NADP(+) = (2S)-2-acetolactate + NADPH + H(+). The enzyme catalyses (2R,3R)-2,3-dihydroxy-3-methylpentanoate + NADP(+) = (S)-2-ethyl-2-hydroxy-3-oxobutanoate + NADPH + H(+). Its pathway is amino-acid biosynthesis; L-isoleucine biosynthesis; L-isoleucine from 2-oxobutanoate: step 2/4. The protein operates within amino-acid biosynthesis; L-valine biosynthesis; L-valine from pyruvate: step 2/4. In terms of biological role, involved in the biosynthesis of branched-chain amino acids (BCAA). Catalyzes an alkyl-migration followed by a ketol-acid reduction of (S)-2-acetolactate (S2AL) to yield (R)-2,3-dihydroxy-isovalerate. In the isomerase reaction, S2AL is rearranged via a Mg-dependent methyl migration to produce 3-hydroxy-3-methyl-2-ketobutyrate (HMKB). In the reductase reaction, this 2-ketoacid undergoes a metal-dependent reduction by NADPH to yield (R)-2,3-dihydroxy-isovalerate. The polypeptide is Ketol-acid reductoisomerase (NADP(+)) (Clostridium botulinum (strain Eklund 17B / Type B)).